The following is a 373-amino-acid chain: PqqA peptide cyclase (373 aa).

Positions 9–224 (LTKPRWLLAE…QSYKEKVKGR (216 aa)) constitute a Radical SAM core domain. The [4Fe-4S] cluster site is built by Cys-23, Cys-27, and Cys-30.

It belongs to the radical SAM superfamily. PqqE family. In terms of assembly, interacts with PqqD. The interaction is necessary for activity of PqqE. [4Fe-4S] cluster is required as a cofactor.

It carries out the reaction [PQQ precursor protein] + S-adenosyl-L-methionine = E-Y cross-linked-[PQQ precursor protein] + 5'-deoxyadenosine + L-methionine + H(+). It participates in cofactor biosynthesis; pyrroloquinoline quinone biosynthesis. Catalyzes the cross-linking of a glutamate residue and a tyrosine residue in the PqqA protein as part of the biosynthesis of pyrroloquinoline quinone (PQQ). This is PqqA peptide cyclase from Methylococcus capsulatus (strain ATCC 33009 / NCIMB 11132 / Bath).